Reading from the N-terminus, the 427-residue chain is MKLRTNAGPLQGTIQVPGDKSISHRAVILGAVAKGETRVKGLLKGEDVLSTIQAFRNLGVRIEEKDDQLVIEGQGFQGLTAPCQTLNMGNSGTSMRLIAGLLAGQPFSVKMIGDESLSKRPMDRIVYPLKQMGVEISGETDRQFPPLQLQGNRNLQPITYTLPISSAQVKSAILLAALQAKGTTQVVEKEITRNHTEEMIQQFGGRLIVDGKRITLVGPQQLTAQEITVPGDISSAAFWLVAGLIIPGSELLLKNVGVNPTRTGILEVVEKMGAQIVYEDMNKKEQVTSIRVVYSRLKGTIISGGLIPRLIDELPIIALLATQAQGTTCIKDAQELRVKETDRIQVVTDTLNSMGANIKATADGMIIKGPTVLYGANTSTYGDHRIGMMTAIAALLVKQGQVHLDKEEAIMTSYPTFFKDLERLCHD.

Residues Lys20, Ser21, and Arg25 each contribute to the 3-phosphoshikimate site. Position 20 (Lys20) interacts with phosphoenolpyruvate. Positions 92 and 120 each coordinate phosphoenolpyruvate. 3-phosphoshikimate contacts are provided by Ser166, Gln168, Asp312, and Lys339. Gln168 serves as a coordination point for phosphoenolpyruvate. The active-site Proton acceptor is the Asp312. Phosphoenolpyruvate-binding residues include Arg343 and Arg385.

This sequence belongs to the EPSP synthase family. As to quaternary structure, monomer.

It localises to the cytoplasm. It carries out the reaction 3-phosphoshikimate + phosphoenolpyruvate = 5-O-(1-carboxyvinyl)-3-phosphoshikimate + phosphate. The protein operates within metabolic intermediate biosynthesis; chorismate biosynthesis; chorismate from D-erythrose 4-phosphate and phosphoenolpyruvate: step 6/7. Catalyzes the transfer of the enolpyruvyl moiety of phosphoenolpyruvate (PEP) to the 5-hydroxyl of shikimate-3-phosphate (S3P) to produce enolpyruvyl shikimate-3-phosphate and inorganic phosphate. This is 3-phosphoshikimate 1-carboxyvinyltransferase from Streptococcus pyogenes serotype M49 (strain NZ131).